Reading from the N-terminus, the 471-residue chain is Adenosylhomocysteinase (471 aa).

Residues Thr60, Asp135, and Glu196 each contribute to the substrate site. An NAD(+)-binding site is contributed by 197-199; that stretch reads TTT. 2 residues coordinate substrate: Lys226 and Asp230. Residues Asn231, 260-265, Glu283, Asn318, 339-341, and Asn387 contribute to the NAD(+) site; these read GYGDVG and IGH.

Belongs to the adenosylhomocysteinase family. Requires NAD(+) as cofactor.

The protein localises to the cytoplasm. It carries out the reaction S-adenosyl-L-homocysteine + H2O = L-homocysteine + adenosine. It participates in amino-acid biosynthesis; L-homocysteine biosynthesis; L-homocysteine from S-adenosyl-L-homocysteine: step 1/1. Functionally, may play a key role in the regulation of the intracellular concentration of adenosylhomocysteine. In Chlorobaculum parvum (strain DSM 263 / NCIMB 8327) (Chlorobium vibrioforme subsp. thiosulfatophilum), this protein is Adenosylhomocysteinase.